Consider the following 309-residue polypeptide: tRNA pseudouridine synthase B (309 aa).

Asp39 serves as the catalytic Nucleophile.

Belongs to the pseudouridine synthase TruB family. Type 1 subfamily.

The catalysed reaction is uridine(55) in tRNA = pseudouridine(55) in tRNA. Its function is as follows. Responsible for synthesis of pseudouridine from uracil-55 in the psi GC loop of transfer RNAs. This chain is tRNA pseudouridine synthase B, found in Bacillus licheniformis (strain ATCC 14580 / DSM 13 / JCM 2505 / CCUG 7422 / NBRC 12200 / NCIMB 9375 / NCTC 10341 / NRRL NRS-1264 / Gibson 46).